Consider the following 176-residue polypeptide: Cytochrome b (176 aa).

3 helical membrane-spanning segments follow: residues 33-53, 77-98, and 113-133; these read FGSLLGICLMLQIMTGLFLAM, WMLRYLHANGASMFFICLYLHV, and WNVGVLLLFTVMATAFMGYVL. The heme b site is built by His-83 and His-97.

Belongs to the cytochrome b family. In terms of assembly, the cytochrome bc1 complex contains 11 subunits: 3 respiratory subunits (MT-CYB, CYC1 and UQCRFS1), 2 core proteins (UQCRC1 and UQCRC2) and 6 low-molecular weight proteins (UQCRH/QCR6, UQCRB/QCR7, UQCRQ/QCR8, UQCR10/QCR9, UQCR11/QCR10 and a cleavage product of UQCRFS1). This cytochrome bc1 complex then forms a dimer. Heme b serves as cofactor.

The protein localises to the mitochondrion inner membrane. Its function is as follows. Component of the ubiquinol-cytochrome c reductase complex (complex III or cytochrome b-c1 complex) that is part of the mitochondrial respiratory chain. The b-c1 complex mediates electron transfer from ubiquinol to cytochrome c. Contributes to the generation of a proton gradient across the mitochondrial membrane that is then used for ATP synthesis. This chain is Cytochrome b (MT-CYB), found in Idionycteris phyllotis (Allen's big-eared bat).